Consider the following 470-residue polypeptide: Light-independent protochlorophyllide reductase subunit N (470 aa).

Residues Cys-23, Cys-48, and Cys-108 each contribute to the [4Fe-4S] cluster site.

This sequence belongs to the BchN/ChlN family. Protochlorophyllide reductase is composed of three subunits; ChlL, ChlN and ChlB. Forms a heterotetramer of two ChlB and two ChlN subunits. [4Fe-4S] cluster is required as a cofactor.

It is found in the plastid. Its subcellular location is the chloroplast. The enzyme catalyses chlorophyllide a + oxidized 2[4Fe-4S]-[ferredoxin] + 2 ADP + 2 phosphate = protochlorophyllide a + reduced 2[4Fe-4S]-[ferredoxin] + 2 ATP + 2 H2O. Its pathway is porphyrin-containing compound metabolism; chlorophyll biosynthesis (light-independent). In terms of biological role, component of the dark-operative protochlorophyllide reductase (DPOR) that uses Mg-ATP and reduced ferredoxin to reduce ring D of protochlorophyllide (Pchlide) to form chlorophyllide a (Chlide). This reaction is light-independent. The NB-protein (ChlN-ChlB) is the catalytic component of the complex. This chain is Light-independent protochlorophyllide reductase subunit N, found in Zygnema circumcarinatum (Green alga).